The following is a 120-amino-acid chain: Aspartate 1-decarboxylase (120 aa).

S24 serves as the catalytic Schiff-base intermediate with substrate; via pyruvic acid. A Pyruvic acid (Ser) modification is found at S24. T56 is a binding site for substrate. Catalysis depends on Y57, which acts as the Proton donor. Substrate is bound at residue 70–72 (GAA).

The protein belongs to the PanD family. As to quaternary structure, heterooctamer of four alpha and four beta subunits. Pyruvate is required as a cofactor. In terms of processing, is synthesized initially as an inactive proenzyme, which is activated by self-cleavage at a specific serine bond to produce a beta-subunit with a hydroxyl group at its C-terminus and an alpha-subunit with a pyruvoyl group at its N-terminus.

The protein localises to the cytoplasm. It carries out the reaction L-aspartate + H(+) = beta-alanine + CO2. It functions in the pathway cofactor biosynthesis; (R)-pantothenate biosynthesis; beta-alanine from L-aspartate: step 1/1. Its function is as follows. Catalyzes the pyruvoyl-dependent decarboxylation of aspartate to produce beta-alanine. This Pyrobaculum islandicum (strain DSM 4184 / JCM 9189 / GEO3) protein is Aspartate 1-decarboxylase.